A 147-amino-acid polypeptide reads, in one-letter code: Large ribosomal subunit protein uL13 (147 aa).

Belongs to the universal ribosomal protein uL13 family. As to quaternary structure, part of the 50S ribosomal subunit.

This protein is one of the early assembly proteins of the 50S ribosomal subunit, although it is not seen to bind rRNA by itself. It is important during the early stages of 50S assembly. The chain is Large ribosomal subunit protein uL13 from Deinococcus geothermalis (strain DSM 11300 / CIP 105573 / AG-3a).